We begin with the raw amino-acid sequence, 120 residues long: Host cell factor C1 regulator 1 (120 aa).

A disordered region spans residues 1 to 30 (MILQQPLERGPPSRDPRATTGVTRGLNASL). The segment covering 20 to 30 (TGVTRGLNASL) has biased composition (polar residues). Residues 58 to 61 (DHPY) are interaction with HCFC1. The short motif at 92 to 101 (IPEALRLLRL) is the Nuclear export signal element.

In terms of assembly, interacts with HCFC1.

The protein resides in the cytoplasm. The protein localises to the nucleus. Its function is as follows. Regulates HCFC1 activity by modulating its subcellular localization. Overexpression of HCFC1R1 leads to accumulation of HCFC1 in the cytoplasm. HCFC1R1-mediated export may provide the pool of cytoplasmic HCFC1 required for import of virion-derived VP16 into the nucleus. The chain is Host cell factor C1 regulator 1 (Hcfc1r1) from Mus musculus (Mouse).